Consider the following 471-residue polypeptide: Glycosyl hydrolase family 109 protein 1 (471 aa).

An N-terminal signal peptide occupies residues 1-15 (MIKNLSTFFVGIALS). Residue Cys16 is the site of N-palmitoyl cysteine attachment. Cys16 is lipidated: S-diacylglycerol cysteine. NAD(+) contacts are provided by residues 70–71 (MR), Asp92, 141–144 (WKHH), 161–162 (EV), and Asn190. Substrate contacts are provided by residues Tyr219, Arg235, 247-250 (YATH), and Tyr325. Tyr247 serves as a coordination point for NAD(+).

The protein belongs to the Gfo/Idh/MocA family. Glycosyl hydrolase 109 subfamily. It depends on NAD(+) as a cofactor.

It localises to the cell membrane. Glycosidase. The polypeptide is Glycosyl hydrolase family 109 protein 1 (Phocaeicola vulgatus (strain ATCC 8482 / DSM 1447 / JCM 5826 / CCUG 4940 / NBRC 14291 / NCTC 11154) (Bacteroides vulgatus)).